We begin with the raw amino-acid sequence, 238 residues long: Orotidine 5'-phosphate decarboxylase (238 aa).

Residues Asp-10, Lys-32, 59–68 (DLKLHDIPNT), Thr-122, Arg-184, Gln-193, Gly-213, and Arg-214 contribute to the substrate site. Lys-61 functions as the Proton donor in the catalytic mechanism.

The protein belongs to the OMP decarboxylase family. Type 1 subfamily. Homodimer.

It carries out the reaction orotidine 5'-phosphate + H(+) = UMP + CO2. The protein operates within pyrimidine metabolism; UMP biosynthesis via de novo pathway; UMP from orotate: step 2/2. In terms of biological role, catalyzes the decarboxylation of orotidine 5'-monophosphate (OMP) to uridine 5'-monophosphate (UMP). This chain is Orotidine 5'-phosphate decarboxylase, found in Bacillus cereus (strain ATCC 10987 / NRS 248).